Here is a 465-residue protein sequence, read N- to C-terminus: Keratin, type I cytoskeletal 13 (465 aa).

A compositionally biased stretch (polar residues) spans 1 to 28 (MNFTSFSITQGSRPQPPSTRGFSGNSFK). Residues 1-47 (MNFTSFSITQGSRPQPPSTRGFSGNSFKSDLIPQSRRSHSVYGTPGS) form a disordered region. The interval 1-98 (MNFTSFSITQ…SGGSDLLLGT (98 aa)) is head. Positions 99-135 (SGKEAMQNLNDRLASYLEKVRSLEERNRELEQKIREW) are coil 1A. The region spanning 100–412 (GKEAMQNLND…ILLEGDEGKF (313 aa)) is the IF rod domain. Residues 136–154 (YEKQGAGTKTKDFSHYFKI) are linker 1. Residues 155–246 (IADLQKQIHD…KSHDEEMKAL (92 aa)) form a coil 1B region. Residues 247–269 (RSQLGGQVNVEVDAAPAEDLTKK) are linker 12. The tract at residues 270–408 (LERMRQQYEQ…RTYRILLEGD (139 aa)) is coil 2. Positions 409-465 (EGKFQTSPHHPSIVTKQTETVVTPVVITNVKTVVEEIIDGKIVSKKEYPGPPEKLMI) are tail.

Belongs to the intermediate filament family. As to quaternary structure, heterotetramer of two type I and two type II keratins. As to expression, expressed in skin.

Its function is as follows. Type 1 keratin. May maintain oral mucosal cell homeostasis and tissue organization in response to mechanical stress. The sequence is that of Keratin, type I cytoskeletal 13 (KRT13) from Protopterus aethiopicus (Marbled lungfish).